The primary structure comprises 430 residues: Cysteate synthase (430 aa).

Position 106 is an N6-(pyridoxal phosphate)lysine (K106). N132 and T381 together coordinate pyridoxal 5'-phosphate.

Belongs to the threonine synthase family. Cysteate synthase subfamily. As to quaternary structure, homotrimer. It depends on pyridoxal 5'-phosphate as a cofactor.

It carries out the reaction O-phospho-L-serine + sulfite + H(+) = L-cysteate + phosphate. It functions in the pathway cofactor biosynthesis; coenzyme M biosynthesis. Specifically catalyzes the beta-elimination of phosphate from L-phosphoserine and the beta-addition of sulfite to the dehydroalanine intermediate to produce L-cysteate. The protein is Cysteate synthase of Methanoculleus marisnigri (strain ATCC 35101 / DSM 1498 / JR1).